Consider the following 198-residue polypeptide: Calcium channel flower (198 aa).

A run of 3 helical transmembrane segments spans residues 36-56, 67-89, and 114-134; these read LGIV…LSII, IIQM…VCIE, and AVPP…GLIF.

It belongs to the calcium channel flower family. As to quaternary structure, homomultimer. Associates with the dally/ magu complex.

The protein localises to the cell membrane. The protein resides in the cytoplasmic vesicle. Its subcellular location is the secretory vesicle. It is found in the synaptic vesicle membrane. It localises to the presynaptic cell membrane. The protein localises to the endosome. Channel activity is inhibited by La(3+), which reduces Ca(2+) influx and thus inhibits it's function in promoting activity-dependent bulk endocytosis (ADBE) in response to high stimuli. In terms of biological role, transmembrane protein which mediates synaptic endocytosis, fitness-based cell culling, neuronal culling, morphogen gradient scaling, and calcium transport. Regulates synaptic endocytosis and hence couples exo- with endocytosis. Controls two major modes of synaptic vesicle (SV) endocytosis in the synaptic boutons of neuromuscular junctions (NMJs); Ca(2+) channel-independent Clathrin-mediated endocytosis (CME) in response to mild stimulation, and Ca(2+) channel-dependent activity-dependent bulk endocytosis (ADBE) in response to strong stimulation. Functions in ADBE and subsequent SV reformation from bulk endosomes by initiating Ca(2+) channel-dependent phosphatidylinositol 4,5-bisphosphate (PtdIns(4,5)P2) compartmentalization in synaptic boutons. There it acts at the periactive zone to provide the low Ca(2+) levels required to initiate Calcineurin activation and upregulate PtdIns(4,5)P2. Conversely PtdIns(4,5)P2 enhances fwe Ca(2+) channel-activity, establishing a positive feedback loop that induces PtdIns(4,5)P2 microdomain at the periactive zone. These microdomains trigger bulk membrane invagination (i.e. ADBE) by triggering actin polymerization while also promoting localization of fwe to bulk endosomes, thereby removing the ADBE trigger to reduce endocytosis and prevent excess membrane uptake. PtdIns(4,5)P2 then promotes SV reformation from the bulk endosomes, to coordinate ADBE and subsequent SV reformation. Different combinations of the flower isoforms at the cell membrane are also required for the identification and elimination of suboptimal or supernumerary cells during development, regeneration, and adulthood. Required for the recognition and elimination of unfit cells in the developing wing during cell competition. In the developing pupal retina, mediates the elimination of unwanted postmitotic neurons, including supernumerary photoreceptor neurons that form at the periphery of the retina and are contained within incomplete ommatidia units. Also required for efficient elimination and replacement of old neurons by newly generated neurons during regeneration in the adult brain following mechanical injury. Downstream of the flower fitness fingerprints, cells identified as unwanted or unfit are eliminated via apoptosis through the expression of ahuizotl (azot). However, the cells marked for elimination by the flower isoforms only undergo apoptosis if additional thresholds are met; (1) their neighboring fit/healthy cells express different levels of the fwe isoforms, and (2) the levels of the protective signal SPARC expressed by the loser or unwanted cells are unable to inhibit caspase activation. These additional thresholds for flower-mediated apoptosis, allows useful cells to recover from transient and limited stress before they are unnecessarily eliminated. Functions with dally and magu in a mechanism of scaling, which utilises apoptosis to ensure that the dpp morphogen gradient, which mediates organ growth, remains proportional to the size of the growing wing. In this mechanism, fwe represses dally- and Magu-dependent activity in expanding the gradient, and dally/Magu inhibits fwe-dependent apoptosis to keep cell death rate low. When the levels of these different proteins are optimally regulated the gradient correctly scales with organ growth but when this fails, fwe-mediated apoptosis is activated to trim the developing tissue to match the correct size of the gradient. The protein is Calcium channel flower of Drosophila persimilis (Fruit fly).